Consider the following 332-residue polypeptide: Glycerol-3-phosphate dehydrogenase [NAD(P)+] (332 aa).

Ser10, Trp11, Lys31, and Lys105 together coordinate NADPH. Sn-glycerol 3-phosphate contacts are provided by Lys105, Gly136, and Ser138. Ala140 contacts NADPH. 5 residues coordinate sn-glycerol 3-phosphate: Lys191, Asp244, Ser254, Arg255, and Asn256. Lys191 serves as the catalytic Proton acceptor. Position 255 (Arg255) interacts with NADPH. NADPH contacts are provided by Val279 and Glu281.

This sequence belongs to the NAD-dependent glycerol-3-phosphate dehydrogenase family.

Its subcellular location is the cytoplasm. The catalysed reaction is sn-glycerol 3-phosphate + NAD(+) = dihydroxyacetone phosphate + NADH + H(+). It carries out the reaction sn-glycerol 3-phosphate + NADP(+) = dihydroxyacetone phosphate + NADPH + H(+). The protein operates within membrane lipid metabolism; glycerophospholipid metabolism. Functionally, catalyzes the reduction of the glycolytic intermediate dihydroxyacetone phosphate (DHAP) to sn-glycerol 3-phosphate (G3P), the key precursor for phospholipid synthesis. This is Glycerol-3-phosphate dehydrogenase [NAD(P)+] from Anaeromyxobacter sp. (strain K).